The chain runs to 549 residues: Cilia- and flagella-associated protein 45 (549 aa).

Residues Met-1–Ala-29 are disordered. 3 coiled-coil regions span residues Arg-119–Val-232, Ile-259–Gln-393, and Ala-434–Glu-522. The interval Arg-388–Ala-416 is disordered.

The protein belongs to the CFAP45 family. Microtubule inner protein component of sperm flagellar doublet microtubules. Interacts with AK8; dimerization with AK8 may create a cavity at the interface of the dimer that can accommodate AMP. Interacts with CFAP52. Interacts with ENKUR. Directly interacts with DNALI1. Interacts with DNAH11. Interacts with DNAI1. As to expression, expressed in respiratory cells (at protein level).

Its subcellular location is the cytoplasm. It localises to the cytoskeleton. It is found in the cilium axoneme. The protein resides in the flagellum axoneme. The protein localises to the cell projection. Its subcellular location is the cilium. It localises to the flagellum. Functionally, microtubule inner protein (MIP) part of the dynein-decorated doublet microtubules (DMTs) in cilia axoneme, which is required for motile cilia beating. It is an AMP-binding protein that may facilitate dynein ATPase-dependent ciliary and flagellar beating via adenine nucleotide homeostasis. May function as a donor of AMP to AK8 and hence promote ADP production. This chain is Cilia- and flagella-associated protein 45 (CFAP45), found in Sus scrofa (Pig).